A 146-amino-acid chain; its full sequence is MSTTERRRTSARRETLLGDQPGAFASARYARITPMKARRVVDMVRGLPVDEALSLLQFAPQSASETVYKVLESAVANAELTEGLERGDLVVSVAQVDEGPTMKRWRPRAQGRATRINKRTSHITLVVQPADVVAEKKATPKKRKSA.

This sequence belongs to the universal ribosomal protein uL22 family. In terms of assembly, part of the 50S ribosomal subunit.

Functionally, this protein binds specifically to 23S rRNA; its binding is stimulated by other ribosomal proteins, e.g. L4, L17, and L20. It is important during the early stages of 50S assembly. It makes multiple contacts with different domains of the 23S rRNA in the assembled 50S subunit and ribosome. Its function is as follows. The globular domain of the protein is located near the polypeptide exit tunnel on the outside of the subunit, while an extended beta-hairpin is found that lines the wall of the exit tunnel in the center of the 70S ribosome. The protein is Large ribosomal subunit protein uL22 of Nocardioides sp. (strain ATCC BAA-499 / JS614).